Reading from the N-terminus, the 278-residue chain is 4-deoxy-L-threo-5-hexosulose-uronate ketol-isomerase (278 aa).

Zn(2+)-binding residues include histidine 196, histidine 198, glutamate 203, and histidine 245.

This sequence belongs to the KduI family. The cofactor is Zn(2+).

The catalysed reaction is 5-dehydro-4-deoxy-D-glucuronate = 3-deoxy-D-glycero-2,5-hexodiulosonate. It participates in glycan metabolism; pectin degradation; 2-dehydro-3-deoxy-D-gluconate from pectin: step 4/5. Its function is as follows. Catalyzes the isomerization of 5-dehydro-4-deoxy-D-glucuronate to 3-deoxy-D-glycero-2,5-hexodiulosonate. The polypeptide is 4-deoxy-L-threo-5-hexosulose-uronate ketol-isomerase (Yersinia enterocolitica serotype O:8 / biotype 1B (strain NCTC 13174 / 8081)).